We begin with the raw amino-acid sequence, 545 residues long: Chaperonin GroEL (545 aa).

ATP contacts are provided by residues T30–P33, K51, D87–T91, G416, N479–A481, and D495.

The protein belongs to the chaperonin (HSP60) family. Forms a cylinder of 14 subunits composed of two heptameric rings stacked back-to-back. Interacts with the co-chaperonin GroES.

The protein localises to the cytoplasm. It carries out the reaction ATP + H2O + a folded polypeptide = ADP + phosphate + an unfolded polypeptide.. Together with its co-chaperonin GroES, plays an essential role in assisting protein folding. The GroEL-GroES system forms a nano-cage that allows encapsulation of the non-native substrate proteins and provides a physical environment optimized to promote and accelerate protein folding. The sequence is that of Chaperonin GroEL from Nautilia profundicola (strain ATCC BAA-1463 / DSM 18972 / AmH).